The sequence spans 342 residues: Uricase (342 aa).

Residues K35 and T80 each act as charge relay system in the active site. Urate is bound by residues T80, D81, F204, R221, V269, Q270, and N296. Catalysis depends on H298, which acts as the Charge relay system. Residues 340 to 342 (SHL) carry the Microbody targeting signal motif.

It belongs to the uricase family. Malpighian tubules.

The protein resides in the peroxisome. The enzyme catalyses urate + O2 + H2O = 5-hydroxyisourate + H2O2. It functions in the pathway purine metabolism; urate degradation; (S)-allantoin from urate: step 1/3. Its activity is regulated as follows. Repressed by 20-hydroxyecdysone. Its function is as follows. Catalyzes the oxidation of uric acid to 5-hydroxyisourate, which is further processed to form (S)-allantoin. The sequence is that of Uricase (Uro) from Drosophila virilis (Fruit fly).